Consider the following 482-residue polypeptide: NADH-quinone oxidoreductase subunit N (482 aa).

The next 13 helical transmembrane spans lie at 10–30, 44–64, 77–97, 113–133, 166–186, 206–226, 243–265, 277–296, 302–322, 328–348, 374–394, 397–417, and 451–471; these read ALGPALPELILTVGALVLILY, VGAIIVLIVALFSVVSQPLGA, GFARVMKTLTLVGSLAALLLA, ILIVLSSIGMLIMASANDLIG, FVLGALSSGMLLYGASLVYGF, LGLVLGIVFVAAGVAFKLAAV, VTAFFASAPKMAAMAMTVRVFIG, IIVFIAIASMALGSFAAIGQ, LMAYSSIGNVGYALIGLAAGT, GVVVYMAIYLAMTLGAFAVIL, AFCLAMMMFSLAGIPPLAGFF, FYVFAAAIKAGLNVLAVIGVV, and IVLAASSVVVVLFWIVPAPLV.

This sequence belongs to the complex I subunit 2 family. In terms of assembly, NDH-1 is composed of 14 different subunits. Subunits NuoA, H, J, K, L, M, N constitute the membrane sector of the complex.

It is found in the cell inner membrane. The catalysed reaction is a quinone + NADH + 5 H(+)(in) = a quinol + NAD(+) + 4 H(+)(out). Functionally, NDH-1 shuttles electrons from NADH, via FMN and iron-sulfur (Fe-S) centers, to quinones in the respiratory chain. The immediate electron acceptor for the enzyme in this species is believed to be ubiquinone. Couples the redox reaction to proton translocation (for every two electrons transferred, four hydrogen ions are translocated across the cytoplasmic membrane), and thus conserves the redox energy in a proton gradient. The chain is NADH-quinone oxidoreductase subunit N from Methylobacterium nodulans (strain LMG 21967 / CNCM I-2342 / ORS 2060).